A 153-amino-acid chain; its full sequence is Histone H2B.3 (153 aa).

Basic and acidic residues-rich tracts occupy residues 1–10 (MAPKKDEKPA) and 20–54 (AKAEAKPKAEKAGKKAKKEPAKKAAKEPKGDGEKK). The interval 1 to 60 (MAPKKDEKPATAEAGAEAPAKAEAKPKAEKAGKKAKKEPAKKAAKEPKGDGEKKDKKKKK) is disordered. N6-acetyllysine occurs at positions 41 and 42. Residue Lys149 forms a Glycyl lysine isopeptide (Lys-Gly) (interchain with G-Cter in ubiquitin) linkage.

The protein belongs to the histone H2B family. The nucleosome is a histone octamer containing two molecules each of H2A, H2B, H3 and H4 assembled in one H3-H4 heterotetramer and two H2A-H2B heterodimers. The octamer wraps approximately 147 bp of DNA. Post-translationally, the N-terminus is blocked. In terms of processing, can be acetylated to form H2BK33ac and H2BK34ac. Acetylated mainly on the ubiquitinated form. Monoubiquitinated to form H2BK143ub1; which is increased during the light period and may give a specific tag for epigenetic transcriptional activation.

The protein localises to the nucleus. Its subcellular location is the chromosome. Its function is as follows. Core component of nucleosome. Nucleosomes wrap and compact DNA into chromatin, limiting DNA accessibility to the cellular machineries which require DNA as a template. Histones thereby play a central role in transcription regulation, DNA repair, DNA replication and chromosomal stability. DNA accessibility is regulated via a complex set of post-translational modifications of histones, also called histone code, and nucleosome remodeling. The chain is Histone H2B.3 from Chlamydomonas reinhardtii (Chlamydomonas smithii).